Reading from the N-terminus, the 404-residue chain is MQIGQRLGTPLSPSATRVMLLGAGELGKEVIIALQRLGVEVIAVDRYPNAPGHQVAHRAHVIDMTDPDALRALVDAERAHLVVPEIEAIATDALAEIEAAGVAEVIPTARATQLTMNREGIRRLAAEELGLPTSPYAFAQSFDAFRAAVAQIGFPCVVKPVMSSSGKGQSVVRSDADVEPAWQYAMAGGRVNHGRVIVEGFVQFDYEITQLTVRAIDPASLKTRTYFCEPIGHVQVAGDYVESWQPQPMSAKALERSRDIAHRVTSALGGRGIFGVELFVRGDDVWFSEVSPRPHDTGLVTLASQRQSEFELHARAILGLPVEPALATPAASAVIYGGLDEAGIAFEGVRDALAVPGADLRLFGKPESFAKRRMGVALATGANVDEARERAKRAAAAVRPVSAR.

Residues glutamate 25–leucine 26 and glutamate 85 contribute to the N(1)-(5-phospho-beta-D-ribosyl)glycinamide site. Residues arginine 118, lysine 159, serine 164–glutamine 169, glutamate 199–valine 202, and glutamate 207 contribute to the ATP site. One can recognise an ATP-grasp domain in the interval arginine 123–leucine 318. Residues glutamate 277 and glutamate 289 each contribute to the Mg(2+) site. N(1)-(5-phospho-beta-D-ribosyl)glycinamide contacts are provided by residues aspartate 296, lysine 365, and arginine 372 to arginine 373.

Belongs to the PurK/PurT family. Homodimer.

The catalysed reaction is N(1)-(5-phospho-beta-D-ribosyl)glycinamide + formate + ATP = N(2)-formyl-N(1)-(5-phospho-beta-D-ribosyl)glycinamide + ADP + phosphate + H(+). It functions in the pathway purine metabolism; IMP biosynthesis via de novo pathway; N(2)-formyl-N(1)-(5-phospho-D-ribosyl)glycinamide from N(1)-(5-phospho-D-ribosyl)glycinamide (formate route): step 1/1. In terms of biological role, involved in the de novo purine biosynthesis. Catalyzes the transfer of formate to 5-phospho-ribosyl-glycinamide (GAR), producing 5-phospho-ribosyl-N-formylglycinamide (FGAR). Formate is provided by PurU via hydrolysis of 10-formyl-tetrahydrofolate. In Burkholderia thailandensis (strain ATCC 700388 / DSM 13276 / CCUG 48851 / CIP 106301 / E264), this protein is Formate-dependent phosphoribosylglycinamide formyltransferase.